Reading from the N-terminus, the 227-residue chain is LysM and putative peptidoglycan-binding domain-containing protein 1 (227 aa).

Residues 1–11 (MASPSRQPPPG) are compositionally biased toward pro residues. Residues 1–22 (MASPSRQPPPGGSGLLQGSRAR) form a disordered region. Phosphoserine occurs at positions 23 and 33. Positions 40-84 (LEHQLEPGDTLAGLALKYGVTMEQIKRANRLYTNDSIFLKKTLYI) constitute a LysM domain. The tract at residues 97-150 (LDSEEEKDGEEKVHPSNSEVWPHSTERKKQETGAGRANGEVLPTPGQETPTPIH) is disordered. Phosphoserine is present on residues S99, S166, S194, and S212.

This is LysM and putative peptidoglycan-binding domain-containing protein 1 (LYSMD1) from Homo sapiens (Human).